The sequence spans 102 residues: Iron-sulfur cluster assembly protein CyaY (102 aa).

Belongs to the frataxin family.

Functionally, involved in iron-sulfur (Fe-S) cluster assembly. May act as a regulator of Fe-S biogenesis. The chain is Iron-sulfur cluster assembly protein CyaY from Histophilus somni (strain 129Pt) (Haemophilus somnus).